Consider the following 312-residue polypeptide: tRNA dimethylallyltransferase (312 aa).

10–17 (GPTAVGKT) is a binding site for ATP. Substrate is bound at residue 12-17 (TAVGKT). Residues 35–38 (DSMQ) are interaction with substrate tRNA.

It belongs to the IPP transferase family. As to quaternary structure, monomer. Mg(2+) is required as a cofactor.

The enzyme catalyses adenosine(37) in tRNA + dimethylallyl diphosphate = N(6)-dimethylallyladenosine(37) in tRNA + diphosphate. Its function is as follows. Catalyzes the transfer of a dimethylallyl group onto the adenine at position 37 in tRNAs that read codons beginning with uridine, leading to the formation of N6-(dimethylallyl)adenosine (i(6)A). The polypeptide is tRNA dimethylallyltransferase (Alkaliphilus metalliredigens (strain QYMF)).